The following is a 146-amino-acid chain: Hemoglobin subunit beta (146 aa).

N-acetylvaline is present on V1. One can recognise a Globin domain in the interval H2–H146. T12 is modified (phosphothreonine). Residue S44 is modified to Phosphoserine. K59 is subject to N6-acetyllysine. H63 contributes to the heme b binding site. K82 bears the N6-acetyllysine mark. Heme b is bound at residue H92. Residue C93 is modified to S-nitrosocysteine. K144 is modified (N6-acetyllysine).

It belongs to the globin family. As to quaternary structure, heterotetramer of two alpha chains and two beta chains. Red blood cells.

Involved in oxygen transport from the lung to the various peripheral tissues. This Ailurus fulgens (Himalayan red panda) protein is Hemoglobin subunit beta (HBB).